The chain runs to 252 residues: Imidazole glycerol phosphate synthase subunit HisF (252 aa).

Residues Asp11 and Asp130 contribute to the active site.

The protein belongs to the HisA/HisF family. As to quaternary structure, heterodimer of HisH and HisF.

The protein localises to the cytoplasm. It carries out the reaction 5-[(5-phospho-1-deoxy-D-ribulos-1-ylimino)methylamino]-1-(5-phospho-beta-D-ribosyl)imidazole-4-carboxamide + L-glutamine = D-erythro-1-(imidazol-4-yl)glycerol 3-phosphate + 5-amino-1-(5-phospho-beta-D-ribosyl)imidazole-4-carboxamide + L-glutamate + H(+). The protein operates within amino-acid biosynthesis; L-histidine biosynthesis; L-histidine from 5-phospho-alpha-D-ribose 1-diphosphate: step 5/9. Functionally, IGPS catalyzes the conversion of PRFAR and glutamine to IGP, AICAR and glutamate. The HisF subunit catalyzes the cyclization activity that produces IGP and AICAR from PRFAR using the ammonia provided by the HisH subunit. The sequence is that of Imidazole glycerol phosphate synthase subunit HisF from Geobacillus sp. (strain WCH70).